Here is a 471-residue protein sequence, read N- to C-terminus: MSQNTGKITQVIGAVVDVEFEPGKLPEIYHALRVTNPAINDSENNLVLEVAQHLGENSVRTIAMDSTDGLKRGQAVLDTGKQICAPVGKKTLGRIINVIGEPVDEMGPIGNDKENPIHREAPPFEDQSTKVEAFTTGIKVVDLLAPYARGGKIGLFGGAGVGKTVLIMELINNIARQHGGFSVFAGVGERTREGNDLWMEMKETGVLEKTALVYGQMNEPPGARARVALTALSIAEHFRDDEGLDVLLFIDNIFRFTQAGSEVSALLGRIPSAVGYQPTLATEMGELQERITSTKNGSITSVQAIYVPADDLTDPAPATAFAHLDATTVLSRQIAELGIYPAVDPLDSTSRILDPQIIGEEHYAIARQVQYILQKYKDLQDIIAILGMDELSEEDKLIVARARKIQRFLSQPFFVAEVFTGSPGKYVELKDTIKGFQEIVSGKHDHLPEQAFYMVGSIEEAVEKAAKLAAV.

157–164 (GGAGVGKT) is an ATP binding site.

The protein belongs to the ATPase alpha/beta chains family. F-type ATPases have 2 components, CF(1) - the catalytic core - and CF(0) - the membrane proton channel. CF(1) has five subunits: alpha(3), beta(3), gamma(1), delta(1), epsilon(1). CF(0) has three main subunits: a(1), b(2) and c(9-12). The alpha and beta chains form an alternating ring which encloses part of the gamma chain. CF(1) is attached to CF(0) by a central stalk formed by the gamma and epsilon chains, while a peripheral stalk is formed by the delta and b chains.

The protein resides in the cell inner membrane. It catalyses the reaction ATP + H2O + 4 H(+)(in) = ADP + phosphate + 5 H(+)(out). Produces ATP from ADP in the presence of a proton gradient across the membrane. The catalytic sites are hosted primarily by the beta subunits. The chain is ATP synthase subunit beta 2 from Pelobacter propionicus (strain DSM 2379 / NBRC 103807 / OttBd1).